Reading from the N-terminus, the 1078-residue chain is DNA gyrase subunit B (1078 aa).

Residues 889–974 enclose the Toprim domain; sequence GKILNIEKTD…QGYIYIACPP (86 aa). Positions 895, 939, and 941 each coordinate Mg(2+).

Belongs to the type II topoisomerase GyrB family. In terms of assembly, heterotetramer, composed of two GyrA and two GyrB chains. In the heterotetramer, GyrA contains the active site tyrosine that forms a transient covalent intermediate with DNA, while GyrB binds cofactors and catalyzes ATP hydrolysis. Requires Mg(2+) as cofactor. In terms of processing, this protein undergoes a protein self splicing that involves a post-translational excision of the intervening region (intein) followed by peptide ligation.

Its subcellular location is the cytoplasm. It carries out the reaction ATP-dependent breakage, passage and rejoining of double-stranded DNA.. Functionally, a type II topoisomerase that negatively supercoils closed circular double-stranded (ds) DNA in an ATP-dependent manner to modulate DNA topology and maintain chromosomes in an underwound state. Negative supercoiling favors strand separation, and DNA replication, transcription, recombination and repair, all of which involve strand separation. Also able to catalyze the interconversion of other topological isomers of dsDNA rings, including catenanes and knotted rings. Type II topoisomerases break and join 2 DNA strands simultaneously in an ATP-dependent manner. The chain is DNA gyrase subunit B (gyrB) from Synechocystis sp. (strain ATCC 27184 / PCC 6803 / Kazusa).